A 141-amino-acid polypeptide reads, in one-letter code: Succinate dehydrogenase [ubiquinone] cytochrome b small subunit 2 (141 aa).

The transit peptide at 1-24 directs the protein to the mitochondrion; sequence MSLIRCTTSKALKFRQLLKMAART. Residues 25 to 44 are Mitochondrial matrix-facing; it reads SVTTPVSREPFSIEDHSLHF. Residues 45–63 traverse the membrane as a helical segment; it reads KIERYWAAGMIPLIPTAYF. The Mitochondrial intermembrane segment spans residues 64–68; that stretch reads IHTPA. A helical membrane pass occupies residues 69-89; that stretch reads MDAVLTVAIVLHVHWGIAGVV. H80 serves as a coordination point for heme b. Residues 90–104 are Mitochondrial matrix-facing; that stretch reads SDYARPFVIGDTLAR. Residue Y92 coordinates a ubiquinone. The helical transmembrane segment at 105 to 126 threads the bilayer; the sequence is VARASVYIITVILLASLLHFNN. At 127–141 the chain is on the mitochondrial intermembrane side; sequence SDVGLTKAFEMVWSL.

The protein belongs to the CybS family. Component of the mitochondrial electron transport chain complex II composed of four subunits: a flavoprotein (Fp), an iron-sulfur protein (Ip), and a large cytochrome b (CybL) subunit and a small cytochrome b (CybS) subunit. There are 2 developmental stage-specific forms of complex II which have the Ip and CybL subunits in common. Complex II from the free-living larvae (aerobic environment) acts as a succinate dehydrogenase and is composed of the common subunit Ip and CybL and the stage specific subunits FpL and CybSL. Complex II from parasitic larvae and adults (anaerobic environment) acts as a fumarate reductase and is composed of the common subunit Ip and CybL and the stage specific subunits FpA and CybSA. The cofactor is heme b.

The protein localises to the mitochondrion inner membrane. It participates in carbohydrate metabolism; tricarboxylic acid cycle; fumarate from succinate (eukaryal route): step 1/1. Functionally, membrane-bound small subunit (CybS) of the mitochondrial electron transport chain complex II, which together with the membrane-bound large subunit (CybL), anchor the catalytic subunits to the inner mitochondria membrane. During the free-living egg-larvae stages, which occur in an aerobic environment, complex II acts as a succinate dehydrogenase by transferring electrons from succinate to ubiquinone. The polypeptide is Succinate dehydrogenase [ubiquinone] cytochrome b small subunit 2 (Ascaris suum (Pig roundworm)).